The primary structure comprises 399 residues: Subtilisin-like protease 4 (399 aa).

The signal sequence occupies residues 1-19 (MVCLKTLSVFLAAFAAADA). Residues 20-118 (RAVFKTQGHK…VEQDQVVRIS (99 aa)) constitute a propeptide that is removed on maturation. One can recognise an Inhibitor I9 domain in the interval 38–117 (YIVVMKDGVS…YVEQDQVVRI (80 aa)). One can recognise a Peptidase S8 domain in the interval 128-399 (SWGLGRVSHR…NRLLYNGSGQ (272 aa)). Active-site charge relay system residues include Asp160 and His191. 2 N-linked (GlcNAc...) asparagine glycosylation sites follow: Asn252 and Asn308. Catalysis depends on Ser346, which acts as the Charge relay system. Asn395 carries N-linked (GlcNAc...) asparagine glycosylation.

This sequence belongs to the peptidase S8 family.

It localises to the secreted. In terms of biological role, secreted subtilisin-like serine protease with keratinolytic activity that contributes to pathogenicity. The polypeptide is Subtilisin-like protease 4 (SUB4) (Arthroderma benhamiae (strain ATCC MYA-4681 / CBS 112371) (Trichophyton mentagrophytes)).